Here is a 155-residue protein sequence, read N- to C-terminus: Vasotocin-neurophysin VT 1 (155 aa).

An N-terminal signal peptide occupies residues 1–20; sequence MPDSTIPLLCVLGLLALSSA. A disulfide bond links Cys-21 and Cys-26. Glycine amide is present on Gly-29. Cystine bridges form between Cys-41-Cys-85, Cys-44-Cys-58, Cys-52-Cys-75, Cys-59-Cys-65, Cys-92-Cys-105, Cys-99-Cys-117, and Cys-106-Cys-111.

The protein belongs to the vasopressin/oxytocin family. Seven disulfide bonds are present in neurophysin.

The protein localises to the secreted. Vasotocin is probably an antidiuretic hormone. The polypeptide is Vasotocin-neurophysin VT 1 (Oncorhynchus masou (Cherry salmon)).